The primary structure comprises 583 residues: Complement factor I (583 aa).

An N-terminal signal peptide occupies residues 1-18; it reads MKLLHVFLLFLCFHLRFC. Cystine bridges form between Cys-33/Cys-255, Cys-43/Cys-54, Cys-48/Cys-59, Cys-61/Cys-93, Cys-67/Cys-86, Cys-75/Cys-106, Cys-141/Cys-181, Cys-154/Cys-214, Cys-186/Cys-196, Cys-229/Cys-247, Cys-241/Cys-256, Cys-259/Cys-271, Cys-266/Cys-284, Cys-278/Cys-293, Cys-327/Cys-453, Cys-365/Cys-381, and Cys-373/Cys-444. Residues 55-108 form the Kazal-like domain; it reads IEGTCVCKLPYQCPKNGTAVCATNRRSFPTYCQQKSLECLHPGTKFLNNGTCTA. A glycan (N-linked (GlcNAc...) asparagine) is linked at Asn-70. Residue Asn-103 is glycosylated (N-linked (GlcNAc...) (complex) asparagine). An SRCR domain is found at 114-212; the sequence is VSLKHGNTDS…TMGYQDFADV (99 aa). Residue Asn-177 is glycosylated (N-linked (GlcNAc...) asparagine). LDL-receptor class A domains lie at 213 to 257 and 258 to 294; these read VCYT…LCCK and ACQG…VGCA. Residues Lys-239, Asp-242, Ile-244, Asp-246, Asp-252, and Glu-253 each contribute to the Ca(2+) site. Residues Tyr-276, Asn-279, Glu-281, Asp-283, Asp-289, and Glu-290 each coordinate Ca(2+). In terms of domain architecture, Peptidase S1 spans 340-574; sequence IVGGKRAQLG…YFDWISYHVG (235 aa). Residues His-380 and Asp-429 each act as charge relay system in the active site. Asn-464 and Asn-494 each carry an N-linked (GlcNAc...) asparagine glycan. Disulfide bonds link Cys-467/Cys-531, Cys-495/Cys-510, and Cys-521/Cys-550. The active-site Charge relay system is Ser-525. N-linked (GlcNAc...) asparagine glycosylation occurs at Asn-536.

Belongs to the peptidase S1 family. As to quaternary structure, heterodimer of a light and heavy chains; disulfide-linked. The fully processed and mature protein circulates as a zymogen, and is allosterically activated by substrate-induced remodeling of the active site. Interacts with C3b. Interacts with complement factor H. (Microbial infection) Interacts with Staphylococcus aureus clumping factor A/ClfA; this interaction enhances cleavage of C3b into iC3b by CFI. As to expression, expressed in the liver by hepatocytes. Also present in other cells such as monocytes, fibroblasts or keratinocytes.

Its subcellular location is the secreted. The protein localises to the extracellular space. It catalyses the reaction Inactivates complement subcomponents C3b, iC3b and C4b by proteolytic cleavage.. In terms of biological role, trypsin-like serine protease that plays an essential role in regulating the immune response by controlling all complement pathways. Inhibits these pathways by cleaving three peptide bonds in the alpha-chain of C3b and two bonds in the alpha-chain of C4b thereby inactivating these proteins. Essential cofactors for these reactions include factor H and C4BP in the fluid phase and membrane cofactor protein/CD46 and CR1 on cell surfaces. The presence of these cofactors on healthy cells allows degradation of deposited C3b by CFI in order to prevent undesired complement activation, while in apoptotic cells or microbes, the absence of such cofactors leads to C3b-mediated complement activation and subsequent opsonization. The chain is Complement factor I (CFI) from Homo sapiens (Human).